The primary structure comprises 195 residues: Inosine triphosphate pyrophosphatase (195 aa).

Residue 13–18 (TGNAKK) coordinates ITP. E43 is a Mg(2+) binding site. ITP is bound by residues K55, 71–72 (DT), K88, 148–151 (FGWD), K171, and 176–177 (HR).

This sequence belongs to the HAM1 NTPase family. In terms of assembly, homodimer. Requires Mg(2+) as cofactor. Mn(2+) serves as cofactor.

It is found in the cytoplasm. It catalyses the reaction ITP + H2O = IMP + diphosphate + H(+). The catalysed reaction is dITP + H2O = dIMP + diphosphate + H(+). It carries out the reaction XTP + H2O = XMP + diphosphate + H(+). The enzyme catalyses N(6)-hydroxy-dATP + H2O = N(6)-hydroxy-dAMP + diphosphate + H(+). Its function is as follows. Pyrophosphatase that hydrolyzes the non-canonical purine nucleotides inosine triphosphate (ITP), deoxyinosine triphosphate (dITP) as well as 2'-deoxy-N-6-hydroxylaminopurine triphosphate (dHAPTP) and xanthosine 5'-triphosphate (XTP) to their respective monophosphate derivatives. The enzyme does not distinguish between the deoxy- and ribose forms. Probably excludes non-canonical purines from RNA and DNA precursor pools, thus preventing their incorporation into RNA and DNA and avoiding chromosomal lesions. The chain is Inosine triphosphate pyrophosphatase (itpa) from Xenopus laevis (African clawed frog).